The chain runs to 137 residues: Putative pre-16S rRNA nuclease (137 aa).

The protein belongs to the YqgF nuclease family.

It localises to the cytoplasm. Functionally, could be a nuclease involved in processing of the 5'-end of pre-16S rRNA. In Clostridium botulinum (strain Eklund 17B / Type B), this protein is Putative pre-16S rRNA nuclease.